We begin with the raw amino-acid sequence, 550 residues long: Glucose-6-phosphate isomerase 2 (550 aa).

The active-site Proton donor is E357. Residues H388 and K514 contribute to the active site. Residues 527-550 (DTGALGHDSSTNGLIRHYRERHGK) form a disordered region.

This sequence belongs to the GPI family.

It localises to the cytoplasm. The enzyme catalyses alpha-D-glucose 6-phosphate = beta-D-fructose 6-phosphate. The protein operates within carbohydrate biosynthesis; gluconeogenesis. Its pathway is carbohydrate degradation; glycolysis; D-glyceraldehyde 3-phosphate and glycerone phosphate from D-glucose: step 2/4. Catalyzes the reversible isomerization of glucose-6-phosphate to fructose-6-phosphate. The sequence is that of Glucose-6-phosphate isomerase 2 from Chromobacterium violaceum (strain ATCC 12472 / DSM 30191 / JCM 1249 / CCUG 213 / NBRC 12614 / NCIMB 9131 / NCTC 9757 / MK).